The chain runs to 637 residues: Transcription termination factor FttA (637 aa).

Residues 4–71 form a KHa region; that stretch reads EDVLLDLKHK…IAMRPDPRVL (68 aa). Residues 72-139 form a KHb region; it reads ATPEDSISII…WIPKVVRTPP (68 aa). A metallo-beta-lactamase N-terminus region spans residues 180 to 383; sequence WVRVTALGGC…VISEATYGNA (204 aa). His-242, His-244, Asp-246, His-247, His-329, and Asp-352 together coordinate Zn(2+). Residues 384-578 are beta-Casp; the sequence is NAFQPALKDA…MEVQVVDGFS (195 aa). The metallo-beta-lactamase C-terminus stretch occupies residues 579 to 637; sequence GHSDRRQLMEYVKRMQPRPERVFTEHGDEKACVDLASSVYKKLKIETRALTNLETVRLL. Zn(2+) is bound at residue His-604.

Belongs to the metallo-beta-lactamase superfamily. RNA-metabolizing metallo-beta-lactamase-like family. FttA subfamily. Homodimer. Interacts with RNA polymerase (RNAP), interacts with the Spt4-Spt5 complex. Requires Zn(2+) as cofactor.

Functionally, terminates transcription on the whole genome. Termination is linked to FttA-mediated RNA cleavage and does not require NTP hydrolysis. Cleaves endonucleolytically at the RNA exit channel of RNA polymerase (RNAP); the 5'-3' exonuclease activity of this protein degrades the nascent RNA released from RNAP. This chain is Transcription termination factor FttA, found in Methanosarcina mazei (strain ATCC BAA-159 / DSM 3647 / Goe1 / Go1 / JCM 11833 / OCM 88) (Methanosarcina frisia).